We begin with the raw amino-acid sequence, 323 residues long: Cell division protein ZipA (323 aa).

At 1–4 the chain is on the periplasmic side; it reads MDLN. Residues 5 to 25 traverse the membrane as a helical segment; sequence TILIILGIIALIILVVHGLWA. The Cytoplasmic portion of the chain corresponds to 26-323; the sequence is NRREKSQYFK…AEKAYLDKVR (298 aa). Positions 44–73 are disordered; the sequence is SRLREPPAHIQSASEEKKDANTSTPTAEVS.

This sequence belongs to the ZipA family. In terms of assembly, interacts with FtsZ via their C-terminal domains.

Its subcellular location is the cell inner membrane. In terms of biological role, essential cell division protein that stabilizes the FtsZ protofilaments by cross-linking them and that serves as a cytoplasmic membrane anchor for the Z ring. Also required for the recruitment to the septal ring of downstream cell division proteins. This Pasteurella multocida (strain Pm70) protein is Cell division protein ZipA.